A 136-amino-acid chain; its full sequence is Holo-[acyl-carrier-protein] synthase (136 aa).

Residues Asp8 and Glu57 each contribute to the Mg(2+) site.

Belongs to the P-Pant transferase superfamily. AcpS family. The cofactor is Mg(2+).

It is found in the cytoplasm. It catalyses the reaction apo-[ACP] + CoA = holo-[ACP] + adenosine 3',5'-bisphosphate + H(+). Transfers the 4'-phosphopantetheine moiety from coenzyme A to a Ser of acyl-carrier-protein. The protein is Holo-[acyl-carrier-protein] synthase of Methylobacterium radiotolerans (strain ATCC 27329 / DSM 1819 / JCM 2831 / NBRC 15690 / NCIMB 10815 / 0-1).